We begin with the raw amino-acid sequence, 845 residues long: Putative DEAD-box ATP-dependent RNA helicase 33 (845 aa).

2 disordered regions span residues 129–149 (GHPDSGEKTAKLKQSHGPMSP) and 282–302 (KFRKNDSSTEEDSDEEGNEGK). Over residues 289–298 (STEEDSDEEG) the composition is skewed to acidic residues. A Q motif motif is present at residues 375–403 (KRFDESCISPLTLKALSASGIVKMTRVQD). One can recognise a Helicase ATP-binding domain in the interval 406-590 (LSECLDGKDA…QLVLKRDHSY (185 aa)). Residue 419-426 (AKTGTGKS) participates in ATP binding. A DEAD box motif is present at residues 538–541 (DEAD). The 155-residue stretch at 624–778 (LLKEHINNMP…QVDQSMAKID (155 aa)) folds into the Helicase C-terminal domain.

Belongs to the DEAD box helicase family.

It catalyses the reaction ATP + H2O = ADP + phosphate + H(+). The sequence is that of Putative DEAD-box ATP-dependent RNA helicase 33 (RH33) from Arabidopsis thaliana (Mouse-ear cress).